The chain runs to 361 residues: UDP-N-acetylglucosamine--N-acetylmuramyl-(pentapeptide) pyrophosphoryl-undecaprenol N-acetylglucosamine transferase (361 aa).

UDP-N-acetyl-alpha-D-glucosamine-binding positions include 13–15 (TGG), N125, R167, S196, I251, 270–275 (ALTVTE), and Q296.

The protein belongs to the glycosyltransferase 28 family. MurG subfamily.

Its subcellular location is the cell inner membrane. It carries out the reaction di-trans,octa-cis-undecaprenyl diphospho-N-acetyl-alpha-D-muramoyl-L-alanyl-D-glutamyl-meso-2,6-diaminopimeloyl-D-alanyl-D-alanine + UDP-N-acetyl-alpha-D-glucosamine = di-trans,octa-cis-undecaprenyl diphospho-[N-acetyl-alpha-D-glucosaminyl-(1-&gt;4)]-N-acetyl-alpha-D-muramoyl-L-alanyl-D-glutamyl-meso-2,6-diaminopimeloyl-D-alanyl-D-alanine + UDP + H(+). It participates in cell wall biogenesis; peptidoglycan biosynthesis. Its function is as follows. Cell wall formation. Catalyzes the transfer of a GlcNAc subunit on undecaprenyl-pyrophosphoryl-MurNAc-pentapeptide (lipid intermediate I) to form undecaprenyl-pyrophosphoryl-MurNAc-(pentapeptide)GlcNAc (lipid intermediate II). The chain is UDP-N-acetylglucosamine--N-acetylmuramyl-(pentapeptide) pyrophosphoryl-undecaprenol N-acetylglucosamine transferase from Psychrobacter arcticus (strain DSM 17307 / VKM B-2377 / 273-4).